Reading from the N-terminus, the 232-residue chain is Phosphoribosylformylglycinamidine synthase subunit PurQ (232 aa).

A Glutamine amidotransferase type-1 domain is found at 2–232 (KIAIIQFGGT…SMADYITENF (231 aa)). Cys-86 (nucleophile) is an active-site residue. Catalysis depends on residues His-203 and Glu-205.

Part of the FGAM synthase complex composed of 1 PurL, 1 PurQ and 2 PurS subunits.

The protein localises to the cytoplasm. It catalyses the reaction N(2)-formyl-N(1)-(5-phospho-beta-D-ribosyl)glycinamide + L-glutamine + ATP + H2O = 2-formamido-N(1)-(5-O-phospho-beta-D-ribosyl)acetamidine + L-glutamate + ADP + phosphate + H(+). It carries out the reaction L-glutamine + H2O = L-glutamate + NH4(+). It functions in the pathway purine metabolism; IMP biosynthesis via de novo pathway; 5-amino-1-(5-phospho-D-ribosyl)imidazole from N(2)-formyl-N(1)-(5-phospho-D-ribosyl)glycinamide: step 1/2. Functionally, part of the phosphoribosylformylglycinamidine synthase complex involved in the purines biosynthetic pathway. Catalyzes the ATP-dependent conversion of formylglycinamide ribonucleotide (FGAR) and glutamine to yield formylglycinamidine ribonucleotide (FGAM) and glutamate. The FGAM synthase complex is composed of three subunits. PurQ produces an ammonia molecule by converting glutamine to glutamate. PurL transfers the ammonia molecule to FGAR to form FGAM in an ATP-dependent manner. PurS interacts with PurQ and PurL and is thought to assist in the transfer of the ammonia molecule from PurQ to PurL. This Methanosarcina mazei (strain ATCC BAA-159 / DSM 3647 / Goe1 / Go1 / JCM 11833 / OCM 88) (Methanosarcina frisia) protein is Phosphoribosylformylglycinamidine synthase subunit PurQ.